We begin with the raw amino-acid sequence, 59 residues long: Putative potassium channel toxin Ts25 (59 aa).

Positions 1 to 22 (MKAFYGILIIFILISMIHLSQQ) are cleaved as a signal peptide. 3 disulfide bridges follow: Cys29/Cys50, Cys35/Cys55, and Cys39/Cys57.

This sequence belongs to the short scorpion toxin superfamily. Potassium channel inhibitor family. Alpha-KTx 04 subfamily. As to expression, expressed by the venom gland.

The protein localises to the secreted. Potently blocks Kv1.1/KCNA1 (85%), Kv1.2/KCNA2 (91%), Kv1.3/KCNA3 (89%), Kv1.6/KCNA6 (94%), and Shaker (97%). The protein is Putative potassium channel toxin Ts25 of Tityus serrulatus (Brazilian scorpion).